An 855-amino-acid chain; its full sequence is DNA mismatch repair protein MutS (855 aa).

616–623 contacts ATP; it reads GPNMGGKS.

It belongs to the DNA mismatch repair MutS family.

This protein is involved in the repair of mismatches in DNA. It is possible that it carries out the mismatch recognition step. This protein has a weak ATPase activity. The protein is DNA mismatch repair protein MutS of Escherichia coli O139:H28 (strain E24377A / ETEC).